An 89-amino-acid chain; its full sequence is U-scoloptoxin(11)-Sm4a (89 aa).

Residues 1 to 17 (MFFKLVLVSAVAIQALS) form the signal peptide.

The protein belongs to the scoloptoxin-11 family. Post-translationally, contains 3 disulfide bonds. In terms of tissue distribution, expressed by the venom gland.

It localises to the secreted. This Scolopendra morsitans (Tanzanian blue ringleg centipede) protein is U-scoloptoxin(11)-Sm4a.